Consider the following 28-residue polypeptide: PNYKLTYFNLRGRAEISRYLFAYAGIKY.

A GST N-terminal domain is found at 1-28; that stretch reads PNYKLTYFNLRGRAEISRYLFAYAGIKY. Position 7 (Tyr7) interacts with glutathione.

This sequence belongs to the GST superfamily. Sigma family. In terms of assembly, homodimer.

The protein localises to the cytoplasm. It carries out the reaction RX + glutathione = an S-substituted glutathione + a halide anion + H(+). Functionally, conjugation of reduced glutathione to a wide number of exogenous and endogenous hydrophobic electrophiles. This chain is Glutathione S-transferase 5, found in Gallus gallus (Chicken).